Reading from the N-terminus, the 389-residue chain is Transmembrane protease serine 11A (389 aa).

Over 1-23 (MEVAGYGTHNRDLKQWMVTLLSA) the chain is Cytoplasmic. The chain crosses the membrane as a helical; Signal-anchor for type II membrane protein span at residues 24 to 44 (LSLMMVVVTIGLLALFLVFDI). One can recognise an SEA domain in the interval 31 to 148 (VTIGLLALFL…SLVQVKDCGK (118 aa)). Over 45–389 (QVNSNSGQKS…RHWIASKTGL (345 aa)) the chain is Extracellular. A Peptidase S1 domain is found at 158–388 (IVSGNPAAKG…YRHWIASKTG (231 aa)). A disulfide bridge links cysteine 183 with cysteine 199. Active-site charge relay system residues include histidine 198 and aspartate 243. Residue asparagine 274 is glycosylated (N-linked (GlcNAc...) asparagine). 2 disulfides stabilise this stretch: cysteine 308/cysteine 324 and cysteine 335/cysteine 364. The Charge relay system role is filled by serine 339.

It belongs to the peptidase S1 family.

The protein localises to the membrane. Functionally, probable serine protease which may play a role in cellular senescence. Overexpression inhibits cell growth and induce G1 cell cycle arrest. The polypeptide is Transmembrane protease serine 11A (Tmprss11a) (Mus musculus (Mouse)).